The primary structure comprises 192 residues: ATP-dependent Clp protease proteolytic subunit 1 (192 aa).

Residue Ser-92 is the Nucleophile of the active site. His-117 is an active-site residue.

This sequence belongs to the peptidase S14 family. As to quaternary structure, fourteen ClpP subunits assemble into 2 heptameric rings which stack back to back to give a disk-like structure with a central cavity, resembling the structure of eukaryotic proteasomes.

The protein localises to the cytoplasm. The catalysed reaction is Hydrolysis of proteins to small peptides in the presence of ATP and magnesium. alpha-casein is the usual test substrate. In the absence of ATP, only oligopeptides shorter than five residues are hydrolyzed (such as succinyl-Leu-Tyr-|-NHMec, and Leu-Tyr-Leu-|-Tyr-Trp, in which cleavage of the -Tyr-|-Leu- and -Tyr-|-Trp bonds also occurs).. Functionally, cleaves peptides in various proteins in a process that requires ATP hydrolysis. Has a chymotrypsin-like activity. Plays a major role in the degradation of misfolded proteins. In Chlamydia trachomatis serovar D (strain ATCC VR-885 / DSM 19411 / UW-3/Cx), this protein is ATP-dependent Clp protease proteolytic subunit 1.